The primary structure comprises 252 residues: Cysteine-rich repeat secretory protein 38 (252 aa).

An N-terminal signal peptide occupies residues 1-27; sequence MSSLKRIVWFPILAIAIQILSIHTVLS. Gnk2-homologous domains are found at residues 34–136 and 142–248; these read FLFH…STNF and FENR…IYPF.

It belongs to the cysteine-rich repeat secretory protein family.

It localises to the secreted. The protein is Cysteine-rich repeat secretory protein 38 (CRRSP38) of Arabidopsis thaliana (Mouse-ear cress).